The following is a 208-amino-acid chain: Small ribosomal subunit protein uS4 (208 aa).

Residues 31–51 are disordered; it reads SALDKRAYGPGQHGQRRAKTS. Residues 98-156 enclose the S4 RNA-binding domain; that stretch reads RRLDNVVYRMGFATTRSSARQLVTHGHVLVDGKRLDIPSYFVRSGQKIEIKEKTKSNPQ.

The protein belongs to the universal ribosomal protein uS4 family. Part of the 30S ribosomal subunit. Contacts protein S5. The interaction surface between S4 and S5 is involved in control of translational fidelity.

Functionally, one of the primary rRNA binding proteins, it binds directly to 16S rRNA where it nucleates assembly of the body of the 30S subunit. In terms of biological role, with S5 and S12 plays an important role in translational accuracy. This is Small ribosomal subunit protein uS4 from Helicobacter pylori (strain HPAG1).